We begin with the raw amino-acid sequence, 141 residues long: Large-conductance mechanosensitive channel (141 aa).

3 helical membrane-spanning segments follow: residues 17–37, 40–60, and 86–106; these read MDLA…ASIV, LIMP…LFIA, and GNFV…FIIV.

This sequence belongs to the MscL family. Homopentamer.

It localises to the cell inner membrane. In terms of biological role, channel that opens in response to stretch forces in the membrane lipid bilayer. May participate in the regulation of osmotic pressure changes within the cell. This chain is Large-conductance mechanosensitive channel, found in Thiobacillus denitrificans (strain ATCC 25259 / T1).